A 655-amino-acid polypeptide reads, in one-letter code: NACHT, LRR and PYD domains-containing protein 10 (655 aa).

The region spanning 1 to 96 (MAMAKARKPR…VDQLSHICLH (96 aa)) is the Pyrin domain. The NACHT domain maps to 167 to 484 (SLVVLQGSAG…AMSYLVKEDQ (318 aa)). ATP is bound at residue 173 to 180 (GSAGTGKT). Over residues 597–609 (QSQNLFSVKSSLS) the composition is skewed to polar residues. A disordered region spans residues 597–655 (QSQNLFSVKSSLSHGPKEEQKCPSVHGQKEGKDNIAGTQKEASTGKGRGTEETPKNTYI). Composition is skewed to basic and acidic residues over residues 611–629 (GPKE…EGKD) and 644–655 (RGTEETPKNTYI).

It belongs to the NLRP family. As to quaternary structure, oligomerizes. Interacts with PYCARD. Also interacts with CASP1 and IL1B. Interacts with NOD1 and components of the NOD1 signaling pathway including RIPK2, NR2C2/TAK1 and IKBKG/NEMO. As to expression, highly expressed in basal and suprabasal epidermal cell layers with lower levels in dermal fibroblast cells (at protein level). Widely expressed with highest levels in heart, brain and skeletal muscle. Also expressed in liver, colon, dermis and epidermis. Little expression detected in myeloid cells or peripheral blood mononuclear cells.

The protein localises to the cytoplasm. It is found in the cell membrane. In terms of biological role, inhibits autoprocessing of CASP1, CASP1-dependent IL1B secretion, PYCARD aggregation and PYCARD-mediated apoptosis but not apoptosis induced by FAS or BID. Displays anti-inflammatory activity. Required for immunity against C.albicans infection. Involved in the innate immune response by contributing to pro-inflammatory cytokine release in response to invasive bacterial infection. Contributes to T-cell-mediated inflammatory responses in the skin. Plays a role in protection against periodontitis through its involvement in induction of IL1A via ERK activation in oral epithelial cells infected with periodontal pathogens. Exhibits both ATPase and GTPase activities. The chain is NACHT, LRR and PYD domains-containing protein 10 (NLRP10) from Homo sapiens (Human).